We begin with the raw amino-acid sequence, 294 residues long: MALRSAAGRLASSSRRRLLSPPTSIHTAFLHSHATSFGYKQVAEEDKSKLVGNVFSSVASSYDLMNDLMSVGLHRLWKDRLISKLNPFPGMKHLDVAGGTGDVAFRALERINSVSHRAMQGTLTDIEEETQIYVCDINPNMLNVGKKRASERGYKEGHCLSWIQGDAEALSFEDGSMDGYTIAFGIRNVTHIEKALSEAYRVLKRGGRFLCLELSHVDVPLFKEIYDVYSFSVIPAVGELVAGDRQSYQYLVESIRRFPNQEKFAQMIQEAGFERVEYENLVGGVVAIHSGLKL.

A mitochondrion-targeting transit peptide spans 1-10 (MALRSAAGRL). S-adenosyl-L-methionine contacts are provided by residues threonine 100, aspartate 136, and 166 to 167 (DA).

This sequence belongs to the class I-like SAM-binding methyltransferase superfamily. MenG/UbiE family. As to quaternary structure, component of a multi-subunit COQ enzyme complex.

The protein localises to the mitochondrion inner membrane. The catalysed reaction is a 2-methoxy-6-(all-trans-polyprenyl)benzene-1,4-diol + S-adenosyl-L-methionine = a 5-methoxy-2-methyl-3-(all-trans-polyprenyl)benzene-1,4-diol + S-adenosyl-L-homocysteine + H(+). It participates in cofactor biosynthesis; ubiquinone biosynthesis. Functionally, methyltransferase required for the conversion of 2-polyprenyl-6-methoxy-1,4-benzoquinol (DDMQH2) to 2-polyprenyl-3-methyl-6-methoxy-1,4-benzoquinol (DMQH2). This Oryza sativa subsp. japonica (Rice) protein is 2-methoxy-6-polyprenyl-1,4-benzoquinol methylase, mitochondrial.